A 114-amino-acid polypeptide reads, in one-letter code: Seed trypsin/chymotrypsin inhibitor TI5-72 (114 aa).

Positions 1–28 are cleaved as a signal peptide; that stretch reads MELMNKKVMMKLALMVFLLSFAANVVNA. Positions 29–42 are excised as a propeptide; that stretch reads RFDSTSFITQVLSN. 7 disulfide bridges follow: Cys50/Cys103, Cys51/Cys66, Cys54/Cys99, Cys56/Cys64, Cys73/Cys80, Cys77/Cys92, and Cys82/Cys90.

It belongs to the Bowman-Birk serine protease inhibitor family. Seed.

Its function is as follows. Inhibitor of trypsin and of chymotrypsin. May function as a natural phytochemical defense against predators. The protein is Seed trypsin/chymotrypsin inhibitor TI5-72 (TI572) of Pisum sativum (Garden pea).